The following is a 197-amino-acid chain: Protein tyrosine phosphatase receptor type C-associated protein (197 aa).

The helical transmembrane segment at 33–53 threads the bilayer; sequence VVTIVLLLLLLLLLVTALALA. A phosphoserine mark is found at serine 99 and serine 103. Disordered stretches follow at residues 120 to 164 and 177 to 197; these read GPEE…GSSA and SAAW…VTAL. The span at 124-145 shows a compositional bias: basic and acidic residues; that stretch reads AAAKEEEQRCQAEQTRDPRDTD.

Interacts with CD45/PTPRC. Phosphorylated on tyrosine residues. In terms of tissue distribution, leukocyte-specific. Expressed in B- and T-cell lines, in spleen, thymus, and bone marrow of adult mice, and in embryos.

Its subcellular location is the membrane. The sequence is that of Protein tyrosine phosphatase receptor type C-associated protein (Ptprcap) from Mus musculus (Mouse).